The primary structure comprises 324 residues: Methyltransferase pytC (324 aa).

The segment at 1 to 28 is disordered; sequence MTVRTAAEPPNRIEVDMDAPSLDTDSSC.

It belongs to the methyltransferase superfamily. LaeA methyltransferase family.

It functions in the pathway secondary metabolite biosynthesis. Its function is as follows. Methyltransferase; part of the gene cluster that mediates the biosynthesis of pyranterreones, a family of antioxidative compounds. The first step of pyranonigrins biosynthesis is performed by the hybrid PKS-NRPS synthetase pytA that condenses 4 malonyl-CoA units ato the acetyl starter unit by the modular PKS of pytA. The acyl chain is then connected to an L-serine through the amide bond by the modular NRPS of pytA. A tetramic acid is formed and released from the PKS-NRPS pytA to give pyranterreone 5 with the help of the thioesterase pytI. Pyranterreone 5 could be methylated by pytC to afford pyranterreone 6. Both pyranterreones 5 and 6 are subsequently oxidized by the FAD-linked oxidoreductase pytB and the cytochrome P450 monooxygenase pytD to form the fused gamma-pyrone core, resulting in pyranterreones 7 and 11, respectively. The hydroxy group at C-8 of pyranterreones 7 and 11 are dehydrated by the aspartyl protease pytH to form a delta-7 double bond to give pyranterreones 3 and 1, 2 accordingly. The exo-methylene of pyranterreone 3 could be reduced into a pendant methyl by reductase pytE to provide pyranterreone 4, also known as cordylactam. Pyranterreone 4 can be reconverted to pyranterreone 3 through pytB-catalyzed dehydrogenation or further oxidized to pyranterreones 9 and 10. The chain is Methyltransferase pytC from Aspergillus terreus.